Here is a 227-residue protein sequence, read N- to C-terminus: Enolase-phosphatase E1 (227 aa).

Mg(2+) contacts are provided by Asp-12 and Glu-14. Substrate-binding positions include 118–119 (SS) and Lys-159. Asp-186 contributes to the Mg(2+) binding site.

It belongs to the HAD-like hydrolase superfamily. MasA/MtnC family. In terms of assembly, monomer. It depends on Mg(2+) as a cofactor.

Its subcellular location is the cytoplasm. It is found in the nucleus. It catalyses the reaction 5-methylsulfanyl-2,3-dioxopentyl phosphate + H2O = 1,2-dihydroxy-5-(methylsulfanyl)pent-1-en-3-one + phosphate. It participates in amino-acid biosynthesis; L-methionine biosynthesis via salvage pathway; L-methionine from S-methyl-5-thio-alpha-D-ribose 1-phosphate: step 3/6. It functions in the pathway amino-acid biosynthesis; L-methionine biosynthesis via salvage pathway; L-methionine from S-methyl-5-thio-alpha-D-ribose 1-phosphate: step 4/6. Its function is as follows. Bifunctional enzyme that catalyzes the enolization of 2,3-diketo-5-methylthiopentyl-1-phosphate (DK-MTP-1-P) into the intermediate 2-hydroxy-3-keto-5-methylthiopentenyl-1-phosphate (HK-MTPenyl-1-P), which is then dephosphorylated to form the acireductone 1,2-dihydroxy-3-keto-5-methylthiopentene (DHK-MTPene). This chain is Enolase-phosphatase E1, found in Vanderwaltozyma polyspora (strain ATCC 22028 / DSM 70294 / BCRC 21397 / CBS 2163 / NBRC 10782 / NRRL Y-8283 / UCD 57-17) (Kluyveromyces polysporus).